Here is a 572-residue protein sequence, read N- to C-terminus: Methionine--tRNA ligase (572 aa).

Positions 11–21 (PYINGIKHLGN) match the 'HIGH' region motif. Zn(2+)-binding residues include C143, C146, C156, and C159. A 'KMSKS' region motif is present at residues 346 to 350 (QFSTS). ATP is bound at residue T349.

This sequence belongs to the class-I aminoacyl-tRNA synthetase family. MetG type 1 subfamily. In terms of assembly, monomer. It depends on Zn(2+) as a cofactor.

The protein localises to the cytoplasm. It catalyses the reaction tRNA(Met) + L-methionine + ATP = L-methionyl-tRNA(Met) + AMP + diphosphate. In terms of biological role, is required not only for elongation of protein synthesis but also for the initiation of all mRNA translation through initiator tRNA(fMet) aminoacylation. In Cereibacter sphaeroides (strain KD131 / KCTC 12085) (Rhodobacter sphaeroides), this protein is Methionine--tRNA ligase.